The following is a 179-amino-acid chain: ATP synthase subunit delta (179 aa).

The protein belongs to the ATPase delta chain family. F-type ATPases have 2 components, F(1) - the catalytic core - and F(0) - the membrane proton channel. F(1) has five subunits: alpha(3), beta(3), gamma(1), delta(1), epsilon(1). F(0) has three main subunits: a(1), b(2) and c(10-14). The alpha and beta chains form an alternating ring which encloses part of the gamma chain. F(1) is attached to F(0) by a central stalk formed by the gamma and epsilon chains, while a peripheral stalk is formed by the delta and b chains.

Its subcellular location is the cell inner membrane. In terms of biological role, f(1)F(0) ATP synthase produces ATP from ADP in the presence of a proton or sodium gradient. F-type ATPases consist of two structural domains, F(1) containing the extramembraneous catalytic core and F(0) containing the membrane proton channel, linked together by a central stalk and a peripheral stalk. During catalysis, ATP synthesis in the catalytic domain of F(1) is coupled via a rotary mechanism of the central stalk subunits to proton translocation. Its function is as follows. This protein is part of the stalk that links CF(0) to CF(1). It either transmits conformational changes from CF(0) to CF(1) or is implicated in proton conduction. The sequence is that of ATP synthase subunit delta from Chlorobium chlorochromatii (strain CaD3).